A 95-amino-acid polypeptide reads, in one-letter code: Late cornified envelope protein 7A (95 aa).

This sequence belongs to the LCE family.

Its function is as follows. Precursors of the cornified envelope of the stratum corneum. This chain is Late cornified envelope protein 7A, found in Homo sapiens (Human).